Here is a 335-residue protein sequence, read N- to C-terminus: Cytoskeleton protein RodZ (335 aa).

Over 1–111 (MNTEATHDQN…LGKRRKKRDG (111 aa)) the chain is Cytoplasmic. The HTH cro/C1-type domain occupies 19 to 71 (LRNAREQLGLSQQAVAERLCLKVSTVRDIEEDKAPADLASTFLRGYIRSYARL). Positions 30 to 49 (QQAVAERLCLKVSTVRDIEE) form a DNA-binding region, H-T-H motif. Residues 112 to 132 (WLMTFTWLVLFVVIGLSGAWW) form a helical; Signal-anchor for type II membrane protein membrane-spanning segment. The Periplasmic segment spans residues 133-335 (WQDHKAQQEE…TLNAEQSPAQ (203 aa)). Positions 148–164 (DQSSAELNNNQSQSVPL) are enriched in polar residues. Residues 148 to 239 (DQSSAELNNN…PDGAAPLPTD (92 aa)) are disordered. 2 stretches are compositionally biased toward low complexity: residues 165–205 (DTST…DPQQ) and 217–239 (DTAATPAPAATTTPDGAAPLPTD).

It belongs to the RodZ family.

It is found in the cell inner membrane. In terms of biological role, cytoskeletal protein that is involved in cell-shape control through regulation of the length of the long axis. This chain is Cytoskeleton protein RodZ, found in Escherichia coli O6:K15:H31 (strain 536 / UPEC).